The sequence spans 202 residues: Snake venom metalloproteinase atroxlysin-1 (202 aa).

A Peptidase M12B domain is found at 6–202; it reads RYVDLFIVVD…ENPQCILNKR (197 aa). Ca(2+)-binding residues include D9 and D93. 3 disulfide bridges follow: C117-C197, C157-C181, and C159-C164. Position 142 (H142) interacts with Zn(2+). E143 is an active-site residue. Positions 146 and 152 each coordinate Zn(2+). 2 residues coordinate Ca(2+): C197 and N200.

This sequence belongs to the venom metalloproteinase (M12B) family. P-I subfamily. As to quaternary structure, monomer. Zn(2+) is required as a cofactor. As to expression, expressed by the venom gland.

The protein resides in the secreted. Its activity is regulated as follows. Inhibited by EDTA, DTT and high concentrations of zinc ions (&gt;2 mM). Weakly inhibited by TLCK. Not inhibited by PMSF. Activated by calcium ions. Functionally, snake venom zinc metalloproteinase that acts on fibrinogen, fibrin, fibronectin (FN1), type I collagen, type IV collagen, integrin alpha-7/beta-1 (ITGA7/ITGB1) and integrin alpha-1/beta-1 (ITGA1/ITGB1). Binds to fibronectin (FN1), fibrinogen and, weakly, to type I collagen and laminin. Cleaves Xaa-Leu bonds. Inhibits ADP- and collagen-induced platelet aggregation both in the presence (IC(50)=1.4 uM for collagen) and in the absence (IC(50)=2.2 uM for collagen) of cofactors. Has hemorrhagic activity. The polypeptide is Snake venom metalloproteinase atroxlysin-1 (Bothrops atrox (Barba amarilla)).